Reading from the N-terminus, the 318-residue chain is Solute carrier family 25 member 34 (318 aa).

Solcar repeat units lie at residues 18–111 (VSPA…ACQA), 115–208 (QQPG…AKAW), and 218–309 (DSWL…LRKL). 6 helical membrane-spanning segments follow: residues 21–41 (AVDLVLGASACCLACVFTNPL), 59–79 (TYPRPYRGFVSSVTAVARADG), 112–134 (GLTQQPGGTVVAGAVAGALGAFV), 184–205 (VGAAVPRVTVGSAAQLATFTSA), 220–240 (WLATLAGGMISSIAVVAVMAP), and 292–315 (LGPHTILSMFFWDELRKLALRAQH).

It belongs to the mitochondrial carrier (TC 2.A.29) family.

Its subcellular location is the mitochondrion inner membrane. The catalysed reaction is a dicarboxylate(in) + sulfate(out) = a dicarboxylate(out) + sulfate(in). Putative antiporter that exchanges dicarboxylates and sulfur oxoanions across the inner membrane of mitochondria. The sequence is that of Solute carrier family 25 member 34 (Slc25a34) from Rattus norvegicus (Rat).